A 206-amino-acid polypeptide reads, in one-letter code: Mediator of RNA polymerase II transcription subunit 19 (206 aa).

A disordered region spans residues 171-206 (GTGTKTKKRKYKSNGSSMASPNTELQPDDMKRRRLE). The segment covering 183-195 (SNGSSMASPNTEL) has biased composition (polar residues).

The protein belongs to the Mediator complex subunit 19 family. Component of the Mediator complex.

It is found in the nucleus. Functionally, component of the Mediator complex, a coactivator involved in the regulated transcription of nearly all RNA polymerase II-dependent genes. Mediator functions as a bridge to convey information from gene-specific regulatory proteins to the basal RNA polymerase II transcription machinery. Mediator is recruited to promoters by direct interactions with regulatory proteins and serves as a scaffold for the assembly of a functional preinitiation complex with RNA polymerase II and the general transcription factors. The chain is Mediator of RNA polymerase II transcription subunit 19 (ROX3) from Kluyveromyces lactis (strain ATCC 8585 / CBS 2359 / DSM 70799 / NBRC 1267 / NRRL Y-1140 / WM37) (Yeast).